The sequence spans 283 residues: Phosphatidylglycerol--prolipoprotein diacylglyceryl transferase (283 aa).

4 helical membrane-spanning segments follow: residues 19 to 39, 59 to 79, 90 to 110, and 120 to 140; these read IGPI…LIGV, LSIW…VLFQ, IIAI…GTLA, and VPFW…QAIG. Arginine 141 contributes to the a 1,2-diacyl-sn-glycero-3-phospho-(1'-sn-glycerol) binding site. The next 3 helical transmembrane spans lie at 181 to 201, 212 to 232, and 245 to 265; these read TFLY…TLFF, VGTL…WIEG, and IAQV…AWLY.

This sequence belongs to the Lgt family.

It is found in the cell inner membrane. It carries out the reaction L-cysteinyl-[prolipoprotein] + a 1,2-diacyl-sn-glycero-3-phospho-(1'-sn-glycerol) = an S-1,2-diacyl-sn-glyceryl-L-cysteinyl-[prolipoprotein] + sn-glycerol 1-phosphate + H(+). It participates in protein modification; lipoprotein biosynthesis (diacylglyceryl transfer). Catalyzes the transfer of the diacylglyceryl group from phosphatidylglycerol to the sulfhydryl group of the N-terminal cysteine of a prolipoprotein, the first step in the formation of mature lipoproteins. This is Phosphatidylglycerol--prolipoprotein diacylglyceryl transferase from Nostoc sp. (strain PCC 7120 / SAG 25.82 / UTEX 2576).